Reading from the N-terminus, the 428-residue chain is Enolase (428 aa).

Glutamine 162 serves as a coordination point for (2R)-2-phosphoglycerate. Glutamate 204 (proton donor) is an active-site residue. Mg(2+) is bound by residues aspartate 241, glutamate 288, and aspartate 315. The (2R)-2-phosphoglycerate site is built by lysine 340, arginine 369, serine 370, and lysine 391. Residue lysine 340 is the Proton acceptor of the active site.

Belongs to the enolase family. Mg(2+) serves as cofactor.

It is found in the cytoplasm. The protein resides in the secreted. The protein localises to the cell surface. It catalyses the reaction (2R)-2-phosphoglycerate = phosphoenolpyruvate + H2O. It participates in carbohydrate degradation; glycolysis; pyruvate from D-glyceraldehyde 3-phosphate: step 4/5. Its function is as follows. Catalyzes the reversible conversion of 2-phosphoglycerate (2-PG) into phosphoenolpyruvate (PEP). It is essential for the degradation of carbohydrates via glycolysis. This Azobacteroides pseudotrichonymphae genomovar. CFP2 protein is Enolase.